The primary structure comprises 360 residues: Phospho-N-acetylmuramoyl-pentapeptide-transferase (360 aa).

10 helical membrane-spanning segments follow: residues 18-38 (VFSY…MMSL), 73-93 (TMGG…WADL), 97-117 (YVWA…VDDY), 135-155 (FWQS…STQA), 168-188 (VLPQ…VGTS), 199-219 (GLAI…AYLT), 236-256 (ASEL…FLWF), 263-283 (VFMG…IAVL), 288-308 (LLLI…ILQV), and 339-359 (IVRF…TLKI).

It belongs to the glycosyltransferase 4 family. MraY subfamily. Mg(2+) is required as a cofactor.

It localises to the cell inner membrane. The catalysed reaction is UDP-N-acetyl-alpha-D-muramoyl-L-alanyl-gamma-D-glutamyl-meso-2,6-diaminopimeloyl-D-alanyl-D-alanine + di-trans,octa-cis-undecaprenyl phosphate = di-trans,octa-cis-undecaprenyl diphospho-N-acetyl-alpha-D-muramoyl-L-alanyl-D-glutamyl-meso-2,6-diaminopimeloyl-D-alanyl-D-alanine + UMP. It functions in the pathway cell wall biogenesis; peptidoglycan biosynthesis. Functionally, catalyzes the initial step of the lipid cycle reactions in the biosynthesis of the cell wall peptidoglycan: transfers peptidoglycan precursor phospho-MurNAc-pentapeptide from UDP-MurNAc-pentapeptide onto the lipid carrier undecaprenyl phosphate, yielding undecaprenyl-pyrophosphoryl-MurNAc-pentapeptide, known as lipid I. In Pseudoalteromonas translucida (strain TAC 125), this protein is Phospho-N-acetylmuramoyl-pentapeptide-transferase.